We begin with the raw amino-acid sequence, 521 residues long: FAD-dependent monooxygenase mdpD (521 aa).

Residues 1 to 48 (MTHFPVNIASDKQEFDPERWAKTPTTESSVNGENGTAPTSGLPSRHPS) are disordered. The segment covering 11-21 (DKQEFDPERWA) has biased composition (basic and acidic residues). Residues 23-48 (TPTTESSVNGENGTAPTSGLPSRHPS) show a composition bias toward polar residues. FAD contacts are provided by V94 and R160. Residues R244 and Y271 contribute to the active site. Residues D369 and G382 each contribute to the FAD site.

Belongs to the paxM FAD-dependent monooxygenase family. FAD serves as cofactor.

Its pathway is secondary metabolite biosynthesis. Functionally, FAD-dependent monooxygenase; part of the gene cluster that mediates the biosynthesis of monodictyphenone, a prenyl xanthone derivative. The pathway begins with the synthesis of atrochrysone thioester by the polyketide synthase (PKS) mdpG. The atrochrysone carboxyl ACP thioesterase mdpF then breaks the thioester bond and releases the atrochrysone carboxylic acid from mdpG. The atrochrysone carboxylic acid is then converted to atrochrysone which is further transformed into emodin anthrone. The next step is performed by the anthrone oxygenase mdpH that catalyzes the oxidation of emodinanthrone to emodin. Emodin is further modified to yield monodictyphenone via several steps involving mdpB, mdpC mdpJ, mdpK and mdpL. These enzymes with xptA, xptB and xptC are also proposed to be involved in the synthesis of shamixanthone from emodin. Especially, direct reduction of emodin by the short chain dehydrogenase mdpC followed by dehydration catalyzed by the scytalone dehydratase-like protein mdpB gives loss of oxygen and formation of chrysophanol intermediate in two simple steps. This chain is FAD-dependent monooxygenase mdpD, found in Emericella nidulans (strain FGSC A4 / ATCC 38163 / CBS 112.46 / NRRL 194 / M139) (Aspergillus nidulans).